Consider the following 250-residue polypeptide: UPF0246 protein cce_3295 (250 aa).

The protein belongs to the UPF0246 family.

The polypeptide is UPF0246 protein cce_3295 (Crocosphaera subtropica (strain ATCC 51142 / BH68) (Cyanothece sp. (strain ATCC 51142))).